Here is a 131-residue protein sequence, read N- to C-terminus: Small ribosomal subunit protein uS11 (131 aa).

The protein belongs to the universal ribosomal protein uS11 family. In terms of assembly, part of the 30S ribosomal subunit. Interacts with proteins S7 and S18. Binds to IF-3.

Functionally, located on the platform of the 30S subunit, it bridges several disparate RNA helices of the 16S rRNA. Forms part of the Shine-Dalgarno cleft in the 70S ribosome. The polypeptide is Small ribosomal subunit protein uS11 (Chromobacterium violaceum (strain ATCC 12472 / DSM 30191 / JCM 1249 / CCUG 213 / NBRC 12614 / NCIMB 9131 / NCTC 9757 / MK)).